Consider the following 803-residue polypeptide: Mastermind-like domain-containing protein 1 (803 aa).

Disordered stretches follow at residues 22-50 (NRQETRKLQESGTSKRRQEGENFHFTGMA), 292-374 (LAAS…APSS), 420-452 (GHLISALPTSTPGPSPPYRPENLSSPGLPQQSF), and 486-641 (QQQQ…PDQS). A compositionally biased stretch (polar residues) spans 296–309 (KQGSATKQGSNRNW). The span at 312-340 (LPPPGLSPPYLPVPSPHPPPPQPPPPPFS) shows a compositional bias: pro residues. Positions 347-362 (SCMSSSSLSGSAVQSS) are enriched in low complexity. Composition is skewed to polar residues over residues 363-374 (PNALLSSMAPSS), 441-452 (NLSSPGLPQQSF), 495-526 (HQANSIFKPMTSSQQPKTLSMIMQQGLSSSSP), and 547-564 (PSPQKMASMSTHSRQSSL). Low complexity predominate over residues 571–588 (ATPAHAPSATASSTATAT). Residues 592-622 (QHHHQQHHHQQHHHQQQHHQQQHHQQHHHQQ) are compositionally biased toward basic residues. The span at 623–641 (QQHQQQQHQQQQQQQPDQS) shows a compositional bias: low complexity.

The protein belongs to the mastermind family.

The protein localises to the nucleus. Transactivates the HES3 promoter independently of NOTCH proteins. HES3 is a non-canonical NOTCH target gene which lacks binding sites for RBPJ. Required for testosterone production. The sequence is that of Mastermind-like domain-containing protein 1 (Mamld1) from Mus musculus (Mouse).